The sequence spans 497 residues: uncharacterized protein (497 aa).

A run of 11 helical transmembrane segments spans residues W91–L111, V119–S139, L149–Y169, A179–L199, I215–I235, M283–F303, L319–I339, M347–A367, L374–I394, F406–F426, and V439–N459.

Belongs to the major facilitator superfamily. Allantoate permease family.

It localises to the golgi apparatus. The protein resides in the membrane. This is an uncharacterized protein from Schizosaccharomyces pombe (strain 972 / ATCC 24843) (Fission yeast).